An 880-amino-acid chain; its full sequence is Pyruvate, phosphate dikinase (880 aa).

The interval 1–348 (MNKLIYYFGN…LYILQTRTAK (348 aa)) is N-terminal. Position 97 (Arg-97) interacts with ATP. The segment at 349 to 405 (RTAIAAINIAVQMVEEKLISKEQALMRIDPESLNQLLHTRIDYSKKLTAIAEGLPAS) is linker 1. The interval 406 to 503 (PGAATGIVVF…VIKQGDIITI (98 aa)) is central. The residue at position 458 (Thr-458) is a Phosphothreonine; by PDRP1. Residue His-460 is the Tele-phosphohistidine intermediate of the active site. The tract at residues 504–538 (DGGSGKIFLGEMPLIQPTFSEESTLILDWADEISS) is linker 2. Positions 539-879 (LKVRANAETV…AAAQAKIKQG (341 aa)) are C-terminal. Substrate is bound by residues Arg-566, Arg-622, Glu-750, Gly-771, Thr-772, Asn-773, and Asp-774. Glu-750 provides a ligand contact to Mg(2+). A Mg(2+)-binding site is contributed by Asp-774. The active-site Proton donor is the Cys-836.

It belongs to the PEP-utilizing enzyme family. In terms of assembly, homodimer. The cofactor is Mg(2+). Phosphorylation of Thr-458 in the dark inactivates the enzyme. Dephosphorylation upon light stimulation reactivates the enzyme.

The catalysed reaction is pyruvate + phosphate + ATP = phosphoenolpyruvate + AMP + diphosphate + H(+). Its activity is regulated as follows. Activated by light-induced dephosphorylation. Inhibited by dark-induced phosphorylation. Both reactions are catalyzed by PDRP1. In terms of biological role, catalyzes the reversible phosphorylation of pyruvate and phosphate. The polypeptide is Pyruvate, phosphate dikinase (ppdK) (Rickettsia typhi (strain ATCC VR-144 / Wilmington)).